The sequence spans 306 residues: Curved DNA-binding protein (306 aa).

A J domain is found at 5-69 (DYYAIMGVKP…QRRAEYDQMW (65 aa)).

Its subcellular location is the cytoplasm. It is found in the nucleoid. In terms of biological role, DNA-binding protein that preferentially recognizes a curved DNA sequence. It is probably a functional analog of DnaJ; displays overlapping activities with DnaJ, but functions under different conditions, probably acting as a molecular chaperone in an adaptive response to environmental stresses other than heat shock. Lacks autonomous chaperone activity; binds native substrates and targets them for recognition by DnaK. Its activity is inhibited by the binding of CbpM. The protein is Curved DNA-binding protein of Shigella sonnei (strain Ss046).